The sequence spans 450 residues: Bifunctional protein GlmU (450 aa).

Residues 1–217 (MKTLILAAGL…VDEITGVNNR (217 aa)) are pyrophosphorylase. UDP-N-acetyl-alpha-D-glucosamine contacts are provided by residues 6–9 (LAAG), Lys-20, Gln-68, 73–74 (GT), 95–97 (YGD), Gly-134, Glu-146, Asn-161, and Asn-215. Position 97 (Asp-97) interacts with Mg(2+). Mg(2+) is bound at residue Asn-215. Residues 218–238 (IQLANLEKKIRRKINEKLMNQ) are linker. The segment at 239-450 (GVRIIDPNAV…GGQKNANNKK (212 aa)) is N-acetyltransferase. UDP-N-acetyl-alpha-D-glucosamine contacts are provided by Arg-320 and Lys-338. His-350 functions as the Proton acceptor in the catalytic mechanism. Positions 353 and 364 each coordinate UDP-N-acetyl-alpha-D-glucosamine. Acetyl-CoA-binding positions include Ala-367, 373 to 374 (NY), Ser-392, Ala-410, and Arg-427.

In the N-terminal section; belongs to the N-acetylglucosamine-1-phosphate uridyltransferase family. The protein in the C-terminal section; belongs to the transferase hexapeptide repeat family. In terms of assembly, homotrimer. It depends on Mg(2+) as a cofactor.

It is found in the cytoplasm. It catalyses the reaction alpha-D-glucosamine 1-phosphate + acetyl-CoA = N-acetyl-alpha-D-glucosamine 1-phosphate + CoA + H(+). The enzyme catalyses N-acetyl-alpha-D-glucosamine 1-phosphate + UTP + H(+) = UDP-N-acetyl-alpha-D-glucosamine + diphosphate. Its pathway is nucleotide-sugar biosynthesis; UDP-N-acetyl-alpha-D-glucosamine biosynthesis; N-acetyl-alpha-D-glucosamine 1-phosphate from alpha-D-glucosamine 6-phosphate (route II): step 2/2. It functions in the pathway nucleotide-sugar biosynthesis; UDP-N-acetyl-alpha-D-glucosamine biosynthesis; UDP-N-acetyl-alpha-D-glucosamine from N-acetyl-alpha-D-glucosamine 1-phosphate: step 1/1. It participates in bacterial outer membrane biogenesis; LPS lipid A biosynthesis. Catalyzes the last two sequential reactions in the de novo biosynthetic pathway for UDP-N-acetylglucosamine (UDP-GlcNAc). The C-terminal domain catalyzes the transfer of acetyl group from acetyl coenzyme A to glucosamine-1-phosphate (GlcN-1-P) to produce N-acetylglucosamine-1-phosphate (GlcNAc-1-P), which is converted into UDP-GlcNAc by the transfer of uridine 5-monophosphate (from uridine 5-triphosphate), a reaction catalyzed by the N-terminal domain. This chain is Bifunctional protein GlmU, found in Thermosipho melanesiensis (strain DSM 12029 / CIP 104789 / BI429).